Consider the following 467-residue polypeptide: ATP synthase subunit beta (467 aa).

ATP is bound at residue 154–161 (GGAGVGKT).

The protein belongs to the ATPase alpha/beta chains family. As to quaternary structure, F-type ATPases have 2 components, CF(1) - the catalytic core - and CF(0) - the membrane proton channel. CF(1) has five subunits: alpha(3), beta(3), gamma(1), delta(1), epsilon(1). CF(0) has three main subunits: a(1), b(2) and c(9-12). The alpha and beta chains form an alternating ring which encloses part of the gamma chain. CF(1) is attached to CF(0) by a central stalk formed by the gamma and epsilon chains, while a peripheral stalk is formed by the delta and b chains.

It localises to the cell inner membrane. The catalysed reaction is ATP + H2O + 4 H(+)(in) = ADP + phosphate + 5 H(+)(out). In terms of biological role, produces ATP from ADP in the presence of a proton gradient across the membrane. The catalytic sites are hosted primarily by the beta subunits. This is ATP synthase subunit beta from Leptospira interrogans serogroup Icterohaemorrhagiae serovar copenhageni (strain Fiocruz L1-130).